A 44-amino-acid chain; its full sequence is U4-ctenitoxin-Pk1a (44 aa).

Cystine bridges form between C4–C18, C11–C24, C15–C42, C17–C33, and C26–C31.

In terms of tissue distribution, expressed by the venom gland.

The protein localises to the secreted. Neurotoxin. Causes spastic paralysis and death in mice within 10 minutes at dose levels of 3 ug per mouse. The protein is U4-ctenitoxin-Pk1a of Phoneutria keyserlingi (Brazilian wandering spider).